The sequence spans 113 residues: Ribulose bisphosphate carboxylase small subunit (113 aa).

The protein belongs to the RuBisCO small chain family. In terms of assembly, heterohexadecamer of 8 large and 8 small subunits.

It is found in the carboxysome. In terms of biological role, ruBisCO catalyzes two reactions: the carboxylation of D-ribulose 1,5-bisphosphate, the primary event in carbon dioxide fixation, as well as the oxidative fragmentation of the pentose substrate in the photorespiration process. Both reactions occur simultaneously and in competition at the same active site. Although the small subunit is not catalytic it is essential for maximal activity. The chain is Ribulose bisphosphate carboxylase small subunit from Synechococcus sp. (strain WH7803).